Consider the following 353-residue polypeptide: Photosystem II D2 protein (353 aa).

Position 2 is an N-acetylthreonine (threonine 2). The residue at position 2 (threonine 2) is a Phosphothreonine. The helical transmembrane segment at 41-61 (CAYFALGGWFTGTTFVTSWYT) threads the bilayer. A chlorophyll a-binding site is contributed by histidine 118. The chain crosses the membrane as a helical span at residues 125-141 (GFMLRQFEIARSVNLRP). Pheophytin a is bound by residues glutamine 130 and asparagine 143. Residues 153 to 166 (VFVSVFLIYPLGQS) traverse the membrane as a helical segment. Histidine 198 contributes to the chlorophyll a binding site. A helical membrane pass occupies residues 208-228 (AALLCAIHGATVENTLFEDGD). A plastoquinone-binding residues include histidine 215 and phenylalanine 262. A Fe cation-binding site is contributed by histidine 215. Residue histidine 269 participates in Fe cation binding. A helical transmembrane segment spans residues 279 to 295 (GLWMSAIGVVGLALNLR).

This sequence belongs to the reaction center PufL/M/PsbA/D family. As to quaternary structure, PSII is composed of 1 copy each of membrane proteins PsbA, PsbB, PsbC, PsbD, PsbE, PsbF, PsbH, PsbI, PsbJ, PsbK, PsbL, PsbM, PsbT, PsbX, PsbY, PsbZ, Psb30/Ycf12, at least 3 peripheral proteins of the oxygen-evolving complex and a large number of cofactors. It forms dimeric complexes. Requires The D1/D2 heterodimer binds P680, chlorophylls that are the primary electron donor of PSII, and subsequent electron acceptors. It shares a non-heme iron and each subunit binds pheophytin, quinone, additional chlorophylls, carotenoids and lipids. There is also a Cl(-1) ion associated with D1 and D2, which is required for oxygen evolution. The PSII complex binds additional chlorophylls, carotenoids and specific lipids. as cofactor.

The protein localises to the plastid. It localises to the chloroplast thylakoid membrane. It carries out the reaction 2 a plastoquinone + 4 hnu + 2 H2O = 2 a plastoquinol + O2. Photosystem II (PSII) is a light-driven water:plastoquinone oxidoreductase that uses light energy to abstract electrons from H(2)O, generating O(2) and a proton gradient subsequently used for ATP formation. It consists of a core antenna complex that captures photons, and an electron transfer chain that converts photonic excitation into a charge separation. The D1/D2 (PsbA/PsbD) reaction center heterodimer binds P680, the primary electron donor of PSII as well as several subsequent electron acceptors. D2 is needed for assembly of a stable PSII complex. This is Photosystem II D2 protein from Tetradesmus obliquus (Green alga).